The sequence spans 246 residues: Bis(5'-nucleosyl)-tetraphosphatase PrpE [asymmetrical] (246 aa).

The protein belongs to the PrpE family. The cofactor is Ni(2+).

The enzyme catalyses P(1),P(4)-bis(5'-guanosyl) tetraphosphate + H2O = GMP + GTP + 2 H(+). Its function is as follows. Asymmetrically hydrolyzes Ap4p to yield AMP and ATP. This Bacillus cereus (strain ATCC 14579 / DSM 31 / CCUG 7414 / JCM 2152 / NBRC 15305 / NCIMB 9373 / NCTC 2599 / NRRL B-3711) protein is Bis(5'-nucleosyl)-tetraphosphatase PrpE [asymmetrical].